The chain runs to 123 residues: Small ribosomal subunit protein eS25 (123 aa).

Positions 1-13 (MPPKKDTKGDSKK) are enriched in basic and acidic residues. Residues 1 to 34 (MPPKKDTKGDSKKGQKAKAGSGGGKAKKKKWSKG) form a disordered region. Residues 25–34 (KAKKKKWSKG) are compositionally biased toward basic residues.

This sequence belongs to the eukaryotic ribosomal protein eS25 family.

The sequence is that of Small ribosomal subunit protein eS25 (RPS25) from Branchiostoma belcheri (Amphioxus).